Here is a 682-residue protein sequence, read N- to C-terminus: Serine/threonine-protein kinase PLK2 (682 aa).

A disordered region spans residues 25–67; it reads ACGGDSKKKRPQQPSEDGQSQAQVTPAAPHHHHHHSHSGPEIS. The segment covering 36 to 48 has biased composition (polar residues); the sequence is QQPSEDGQSQAQV. One can recognise a Protein kinase domain in the interval 79 to 331; that stretch reads YCRGKVLGKG…LDDIIRHDFF (253 aa). Residues 85–93 and lysine 108 contribute to the ATP site; that span reads LGKGGFAKC. The active-site Proton acceptor is aspartate 202. Threonine 236 carries the post-translational modification Phosphothreonine. The tract at residues 402-430 is disordered; the sequence is TSITQQPSKHRTDEELQPPPTTFAKSGTS. POLO box domains are found at residues 500–578 and 598–682; these read WVTK…YMEE and YLLQ…QRCN.

The protein belongs to the protein kinase superfamily. Ser/Thr protein kinase family. CDC5/Polo subfamily. As to quaternary structure, interacts with CIB1. Interacts with NSF; causing NSF dissociation from GRIA2. Catalytic activity is enhanced by phosphorylation of Thr-236.

The protein localises to the cytoplasm. The protein resides in the cytoskeleton. It localises to the microtubule organizing center. Its subcellular location is the centrosome. It is found in the centriole. The protein localises to the cell projection. The protein resides in the dendrite. The enzyme catalyses L-seryl-[protein] + ATP = O-phospho-L-seryl-[protein] + ADP + H(+). It carries out the reaction L-threonyl-[protein] + ATP = O-phospho-L-threonyl-[protein] + ADP + H(+). Activated by phosphorylation of Thr-236. Once activated, activity is stimulated by binding target proteins. Tumor suppressor serine/threonine-protein kinase involved in synaptic plasticity, centriole duplication and G1/S phase transition. Polo-like kinases act by binding and phosphorylating proteins that are already phosphorylated on a specific motif recognized by the POLO box domains. Phosphorylates CPAP, NPM1, RAPGEF2, RASGRF1, SNCA, SIPA1L1 and SYNGAP1. Plays a key role in synaptic plasticity and memory by regulating the Ras and Rap protein signaling: required for overactivity-dependent spine remodeling by phosphorylating the Ras activator RASGRF1 and the Rap inhibitor SIPA1L1 leading to their degradation by the proteasome. Conversely, phosphorylates the Rap activator RAPGEF2 and the Ras inhibitor SYNGAP1, promoting their activity. Also regulates synaptic plasticity independently of kinase activity, via its interaction with NSF that disrupts the interaction between NSF and the GRIA2 subunit of AMPARs, leading to a rapid rundown of AMPAR-mediated current that occludes long term depression. Required for procentriole formation and centriole duplication by phosphorylating CPAP and NPM1, respectively. Its induction by p53/TP53 suggests that it may participate in the mitotic checkpoint following stress. This Rattus norvegicus (Rat) protein is Serine/threonine-protein kinase PLK2 (Plk2).